The primary structure comprises 467 residues: uncharacterized protein (467 aa).

Positions 416–467 (KQQRAQTAVVGTTKELVSKATHMKPPRTPPGEAEHRKRSQSLAICQWNKNSR) are disordered. The segment covering 455 to 467 (QSLAICQWNKNSR) has biased composition (polar residues).

This is an uncharacterized protein from Homo sapiens (Human).